The primary structure comprises 451 residues: Glycylpeptide N-tetradecanoyltransferase (451 aa).

Tetradecanoyl-CoA-binding positions include 34-37 (YKFW), 167-169 (LCV), and 175-179 (SKRLT). The active-site Proton acceptor; via carboxylate is L451.

The protein belongs to the NMT family. In terms of assembly, monomer.

Its subcellular location is the cytoplasm. The catalysed reaction is N-terminal glycyl-[protein] + tetradecanoyl-CoA = N-tetradecanoylglycyl-[protein] + CoA + H(+). Its function is as follows. Adds a myristoyl group to the N-terminal glycine residue of certain cellular proteins. The chain is Glycylpeptide N-tetradecanoyltransferase (NMT1) from Candida glabrata (strain ATCC 2001 / BCRC 20586 / JCM 3761 / NBRC 0622 / NRRL Y-65 / CBS 138) (Yeast).